The chain runs to 204 residues: High frequency lysogenization protein HflD homolog (204 aa).

It belongs to the HflD family.

The protein resides in the cytoplasm. The protein localises to the cell inner membrane. The polypeptide is High frequency lysogenization protein HflD homolog (Xanthomonas campestris pv. campestris (strain ATCC 33913 / DSM 3586 / NCPPB 528 / LMG 568 / P 25)).